The following is a 302-amino-acid chain: Aspartate carbamoyltransferase catalytic subunit (302 aa).

The carbamoyl phosphate site is built by R55 and T56. K83 contributes to the L-aspartate binding site. Residues R105, H133, and Q136 each coordinate carbamoyl phosphate. Residues R166 and R222 each contribute to the L-aspartate site. Positions 262 and 263 each coordinate carbamoyl phosphate.

This sequence belongs to the aspartate/ornithine carbamoyltransferase superfamily. ATCase family. As to quaternary structure, heterododecamer (2C3:3R2) of six catalytic PyrB chains organized as two trimers (C3), and six regulatory PyrI chains organized as three dimers (R2).

It catalyses the reaction carbamoyl phosphate + L-aspartate = N-carbamoyl-L-aspartate + phosphate + H(+). It functions in the pathway pyrimidine metabolism; UMP biosynthesis via de novo pathway; (S)-dihydroorotate from bicarbonate: step 2/3. In terms of biological role, catalyzes the condensation of carbamoyl phosphate and aspartate to form carbamoyl aspartate and inorganic phosphate, the committed step in the de novo pyrimidine nucleotide biosynthesis pathway. This chain is Aspartate carbamoyltransferase catalytic subunit, found in Solibacter usitatus (strain Ellin6076).